The sequence spans 233 residues: Inner kinetochore subunit fta4 (233 aa).

T189 and T191 each carry phosphothreonine.

It belongs to the NKP1 family. In terms of assembly, component of the inner kinetochore constitutive centromere-associated network (CCAN) (also known as central kinetochore Sim4 complex in fission yeast), which is composed of at least cnl2, cnp3, cnp20, fta1, fta2, fta3, fta4, fta6, fta7, mal2, mhf1, mhf2, mis6, mis15, mis17, sim4 and wip1.

It localises to the nucleus. It is found in the chromosome. The protein resides in the centromere. The protein localises to the kinetochore. Component of the kinetochore, a multiprotein complex that assembles on centromeric DNA and attaches chromosomes to spindle microtubules, mediating chromosome segregation and sister chromatid segregation during meiosis and mitosis. Component of the inner kinetochore constitutive centromere-associated network (CCAN), which serves as a structural platform for outer kinetochore assembly. Fta2, fta3 and fta4 associate with the central core (cnt) and inner repeat (inr) region of the centromere. In Schizosaccharomyces pombe (strain 972 / ATCC 24843) (Fission yeast), this protein is Inner kinetochore subunit fta4 (fta4).